The sequence spans 601 residues: Glutathione-regulated potassium-efflux system protein KefB (601 aa).

13 helical membrane passes run 4–24 (SDFL…VPLA), 29–49 (IGAV…GLGF), 55–75 (EILH…GLEL), 87–107 (IFGV…GLLM), 115–135 (AAVV…LQLM), 152–172 (VLLF…LLAG), 177–197 (HFDW…LIGG), 207–227 (FIAA…LVLG), 230–250 (LFMD…GVLL), 262–282 (AIDP…GMSL), 284–304 (LGVL…LVAV), 324–344 (MQFA…FSTA), and 356–376 (ALLL…MKLV). The region spanning 400-519 (KPQVIVVGFG…AGVTQFSRET (120 aa)) is the RCK N-terminal domain.

Belongs to the monovalent cation:proton antiporter 2 (CPA2) transporter (TC 2.A.37) family. KefB subfamily. In terms of assembly, interacts with the regulatory subunit KefG.

It is found in the cell inner membrane. In terms of biological role, pore-forming subunit of a potassium efflux system that confers protection against electrophiles. Catalyzes K(+)/H(+) antiport. The chain is Glutathione-regulated potassium-efflux system protein KefB from Shigella boydii serotype 18 (strain CDC 3083-94 / BS512).